Here is a 346-residue protein sequence, read N- to C-terminus: Protein SHI RELATED SEQUENCE 5 (346 aa).

The interval 7–31 is disordered; that stretch reads LGGRDNNSNNNKQDHHQVDKDHHHQ. Residues 18 to 31 show a composition bias toward basic and acidic residues; the sequence is KQDHHQVDKDHHHQ. Positions 125, 128, 136, 141, 145, and 152 each coordinate Zn(2+). The segment at residues 125 to 152 is a DNA-binding region (zn(2)-C6 fungal-type; degenerate); that stretch reads CQDCGNQAKKDCPHMRCRTCCKSRGFHC. Residues 175–186 show a composition bias toward polar residues; that stretch reads SLQHHSASSRET. The disordered stretch occupies residues 175–215; sequence SLQHHSASSRETQNAKRLREASGGDNNDDKDHSGGGGSALA. The span at 187-207 shows a compositional bias: basic and acidic residues; it reads QNAKRLREASGGDNNDDKDHS. The Required for homo- and heterodimerization signature appears at 269 to 272; that stretch reads IGGH.

It belongs to the SHI protein family.

The protein resides in the nucleus. Transcription activator that binds DNA on 5'-ACTCTAC-3' and promotes auxin homeostasis-regulating gene expression (e.g. YUC genes), as well as genes affecting stamen development, cell expansion and timing of flowering. Synergistically with other SHI-related proteins, regulates gynoecium, stamen and leaf development in a dose-dependent manner, controlling apical-basal patterning. Promotes style and stigma formation, and influences vascular development during gynoecium development. May also have a role in the formation and/or maintenance of the shoot apical meristem (SAM). The protein is Protein SHI RELATED SEQUENCE 5 (SRS5) of Arabidopsis thaliana (Mouse-ear cress).